We begin with the raw amino-acid sequence, 262 residues long: Pimeloyl-[acyl-carrier protein] methyl ester esterase (262 aa).

One can recognise an AB hydrolase-1 domain in the interval 15 to 242 (HLVLLHGWGL…AAHAPFISHP (228 aa)). Substrate contacts are provided by residues Trp-22, 82-83 (SL), and 143-147 (FLALQ). The active-site Nucleophile is Ser-82. Active-site residues include Asp-207 and His-235. His-235 contributes to the substrate binding site.

It belongs to the AB hydrolase superfamily. Carboxylesterase BioH family. In terms of assembly, monomer.

It localises to the cytoplasm. It catalyses the reaction 6-carboxyhexanoyl-[ACP] methyl ester + H2O = 6-carboxyhexanoyl-[ACP] + methanol + H(+). It participates in cofactor biosynthesis; biotin biosynthesis. Its function is as follows. The physiological role of BioH is to remove the methyl group introduced by BioC when the pimeloyl moiety is complete. It allows to synthesize pimeloyl-ACP via the fatty acid synthetic pathway through the hydrolysis of the ester bonds of pimeloyl-ACP esters. This is Pimeloyl-[acyl-carrier protein] methyl ester esterase from Shigella flexneri.